The chain runs to 237 residues: Sugar fermentation stimulation protein homolog (237 aa).

This sequence belongs to the SfsA family.

This is Sugar fermentation stimulation protein homolog from Pseudomonas putida (strain ATCC 47054 / DSM 6125 / CFBP 8728 / NCIMB 11950 / KT2440).